Reading from the N-terminus, the 471-residue chain is Putative ETHYLENE INSENSITIVE 3-like 4 protein (471 aa).

A disordered region spans residues 280-316; it reads DLKISEDQDDQESSGSKRKSESMEPSKSVYTCQNSSC. Polar residues predominate over residues 304–316; it reads PSKSVYTCQNSSC.

Belongs to the EIN3 family.

Its subcellular location is the nucleus. Putative transcription factor that may be involved in the ethylene response pathway. This chain is Putative ETHYLENE INSENSITIVE 3-like 4 protein (EIL4), found in Arabidopsis thaliana (Mouse-ear cress).